A 420-amino-acid chain; its full sequence is Gamma-glutamyl phosphate reductase (420 aa).

This sequence belongs to the gamma-glutamyl phosphate reductase family.

It localises to the cytoplasm. The catalysed reaction is L-glutamate 5-semialdehyde + phosphate + NADP(+) = L-glutamyl 5-phosphate + NADPH + H(+). It functions in the pathway amino-acid biosynthesis; L-proline biosynthesis; L-glutamate 5-semialdehyde from L-glutamate: step 2/2. Functionally, catalyzes the NADPH-dependent reduction of L-glutamate 5-phosphate into L-glutamate 5-semialdehyde and phosphate. The product spontaneously undergoes cyclization to form 1-pyrroline-5-carboxylate. In Streptococcus sanguinis (strain SK36), this protein is Gamma-glutamyl phosphate reductase.